Consider the following 199-residue polypeptide: 5'-deoxynucleotidase YfbR (199 aa).

Substrate-binding positions include 18–19 (RW) and His-33. The region spanning 30-142 (VSEHSLQVAM…VKQADALCAY (113 aa)) is the HD domain. A divalent metal cation contacts are provided by His-33, His-68, and Asp-69. Substrate is bound by residues Asp-69, 77-80 (DLPT), and Asp-137. Asp-137 lines the a divalent metal cation pocket.

Belongs to the 5DNU family. Homodimer. A divalent metal cation serves as cofactor.

The protein localises to the cytoplasm. The catalysed reaction is a 2'-deoxyribonucleoside 5'-phosphate + H2O = a 2'-deoxyribonucleoside + phosphate. Catalyzes the strictly specific dephosphorylation of 2'-deoxyribonucleoside 5'-monophosphates. The protein is 5'-deoxynucleotidase YfbR of Shigella flexneri serotype 5b (strain 8401).